A 277-amino-acid polypeptide reads, in one-letter code: Ribosomal RNA small subunit methyltransferase A (277 aa).

Positions 26, 28, 53, 74, 101, and 123 each coordinate S-adenosyl-L-methionine.

Belongs to the class I-like SAM-binding methyltransferase superfamily. rRNA adenine N(6)-methyltransferase family. RsmA subfamily.

Its subcellular location is the cytoplasm. It carries out the reaction adenosine(1518)/adenosine(1519) in 16S rRNA + 4 S-adenosyl-L-methionine = N(6)-dimethyladenosine(1518)/N(6)-dimethyladenosine(1519) in 16S rRNA + 4 S-adenosyl-L-homocysteine + 4 H(+). In terms of biological role, specifically dimethylates two adjacent adenosines (A1518 and A1519) in the loop of a conserved hairpin near the 3'-end of 16S rRNA in the 30S particle. May play a critical role in biogenesis of 30S subunits. The chain is Ribosomal RNA small subunit methyltransferase A from Opitutus terrae (strain DSM 11246 / JCM 15787 / PB90-1).